Consider the following 1018-residue polypeptide: Serine/threonine-protein kinase 31 (1018 aa).

Positions 78 to 137 (NLDPKKIYGGLFSEDKCWYRCKVLKTISDDKCLVRYIDYGNTEILNRSDIVEIPPELQFS) constitute a Tudor domain. The stretch at 298 to 358 (AKIKQDQKLI…TKHLESTLKT (61 aa)) forms a coiled coil. The region spanning 711–1018 (IGLLKYMNSG…EKTRNGEANP (308 aa)) is the Protein kinase domain. ATP is bound by residues 717–725 (MNSGGLLTM) and Lys-738. The segment at 988–1018 (IECTQHSREDESKMESLDRYSEKTRNGEANP) is disordered.

It belongs to the protein kinase superfamily. Ser/Thr protein kinase family. In terms of tissue distribution, testis specific. Expressed only in male germ cells.

The catalysed reaction is L-seryl-[protein] + ATP = O-phospho-L-seryl-[protein] + ADP + H(+). It catalyses the reaction L-threonyl-[protein] + ATP = O-phospho-L-threonyl-[protein] + ADP + H(+). The chain is Serine/threonine-protein kinase 31 (Stk31) from Mus musculus (Mouse).